We begin with the raw amino-acid sequence, 268 residues long: MAVGKNKGLSKGGKKGGKKKVVDPFSRKDWYDVKAPNMFQTRQIGKTLVNRTQGQRIASDYLKGRVFEVSLADLQKDIDPERSFRKFRLIAEDVQDRNVLCNFHGMDLTTDKYRSMVKKWQTLIEAIVEAKTIDGYLLRVFCIGFTAKDQQSQRKTCYAQQSQVRKIRARMTDIINNEVSGADLKQLVNKLALDSIAKDIEKSCQRIYPLHDVYIRKVKVLKKPRFDVSKLLELHGDGGGKSSDAVVSTEGAVIDRPEGYEPPVQEAV.

Disordered regions lie at residues 1 to 21 and 238 to 268; these read MAVGKNKGLSKGGKKGGKKKV and GGGKSSDAVVSTEGAVIDRPEGYEPPVQEAV.

Belongs to the eukaryotic ribosomal protein eS1 family. In terms of assembly, component of the small ribosomal subunit. Mature ribosomes consist of a small (40S) and a large (60S) subunit. The 40S subunit contains about 33 different proteins and 1 molecule of RNA (18S). The 60S subunit contains about 49 different proteins and 3 molecules of RNA (28S, 5.8S and 5S).

The protein resides in the cytoplasm. Functionally, essential for oogenesis; required for late follicle cell development. The polypeptide is Small ribosomal subunit protein eS1 (Drosophila ananassae (Fruit fly)).